The chain runs to 580 residues: High affinity choline transporter 1 (580 aa).

Residues 1–6 (MSFHVE) are Extracellular-facing. Residues 7 to 27 (GLVAIILFYLLIFLVGIWAAW) traverse the membrane as a helical segment. Over 28-48 (KTKNSGNPEERSEAIIVGGRD) the chain is Cytoplasmic. Residues 49 to 69 (IGLLVGGFTMTATWVGGGYIN) traverse the membrane as a helical segment. Over 70–81 (GTAEAVYGPGCG) the chain is Extracellular. A helical transmembrane segment spans residues 82–102 (LAWAQAPIGYSLSLILGGLFF). At 103–125 (AKPMRSKGYVTMLDPFQQIYGKR) the chain is on the cytoplasmic side. Residues 126-146 (MGGLLFIPALMGEMFWAAAIF) form a helical membrane-spanning segment. Over 147–164 (SALGATISVIIDVDVNIS) the chain is Extracellular. A helical transmembrane segment spans residues 165–185 (VIVSALIAILYTLVGGLYSVA). Topologically, residues 186–191 (YTDVVQ) are cytoplasmic. Residues 192–212 (LFCIFIGLWISVPFALSHPAV) traverse the membrane as a helical segment. The Extracellular portion of the chain corresponds to 213-237 (TDIGFTAVHAKYQSPWLGTIESVEV). A helical transmembrane segment spans residues 238–258 (YTWLDNFLLLMLGGIPWQAYF). Residues 259 to 274 (QRVLSSSSATYAQVLS) lie on the Cytoplasmic side of the membrane. The helical transmembrane segment at 275–295 (FLAAFGCLVMALPAICIGAIG) threads the bilayer. Residues 296 to 317 (ASTDWNQTAYGYPDPKTKEEAD) are Extracellular-facing. An N-linked (GlcNAc...) asparagine glycan is attached at asparagine 301. The helical transmembrane segment at 318–338 (MILPIVLQYLCPVYISFFGLG) threads the bilayer. Topologically, residues 339-376 (AVSAAVMSSADSSILSASSMFARNIYQLSFRQNASDKE) are cytoplasmic. Residues 377–397 (IVWVMRITVLVFGASATAMAL) traverse the membrane as a helical segment. Residues 398-406 (LTKTVYGLW) lie on the Extracellular side of the membrane. The helical transmembrane segment at 407 to 427 (YLSSDLVYIIIFPQLLCVLFI) threads the bilayer. At 428–435 (KGTNTYGA) the chain is on the cytoplasmic side. A helical membrane pass occupies residues 436–456 (VAGYIFGLFLRITGGEPYLYL). Over 457-481 (QPLIFYPGYYSDKNGIYNQRFPFKT) the chain is Extracellular. The chain crosses the membrane as a helical span at residues 482 to 502 (LSMVTSFFTNICVSYLAKYLF). The segment at 502 to 580 (FESGTLPPKL…EGSGTEDNLQ (79 aa)) is mediates interaction with SEC14L1. Over 503–580 (ESGTLPPKLD…EGSGTEDNLQ (78 aa)) the chain is Cytoplasmic. The short motif at 527–532 (DKTILV) is the Dileucine-like motif element.

The protein belongs to the sodium:solute symporter (SSF) (TC 2.A.21) family. Homooligomerizes at cell surface. Interacts with SEC14L1; may regulate SLC5A7. Phosphorylated by PKC and dephosphorylated by PP1/PP2A. As to expression, found in spinal cord, brain-stem, mid-brain and striatum. Specific for cholinergic neurons.

The protein resides in the presynaptic cell membrane. Its subcellular location is the cell projection. It localises to the axon. It is found in the early endosome membrane. The protein localises to the cytoplasmic vesicle. The protein resides in the secretory vesicle. Its subcellular location is the synaptic vesicle membrane. The enzyme catalyses choline(out) + n Na(+)(out) = choline(in) + n Na(+)(in). With respect to regulation, choline uptake activity is regulated by SLC5A7/CHT1 internalization (inactive form) from the cell surface and recycling of internalized SLC5A7/CHT1 into the cell surface (active form). Activated by extracellular chloride ion. Specifically inhibited by nanomolar concentrations of hemicholinium 3. Functionally, high-affinity Na(+)-coupled choline transmembrane symporter. Functions as an electrogenic, voltage-dependent transporter with variable charge/choline stoichiometry. Choline uptake and choline-induced current is also Cl(-)-dependent where Cl(-) is likely a regulatory ion rather than cotransported ion. Plays a critical role in acetylcholine (ACh) synthesis by taking up the substrate choline from the synaptic cleft into the presynaptic nerve terminals after neurotransmitter release. SLC5A7/CHT1-mediated choline high-affinity transport in cholinergic neurons is the rate-limiting step for production of ACh, thereby facilitating communication by subsequent action potentials. Localized predominantly in presynaptic terminal intracellular organelles, and translocated to the plasma membrane in active form in response to neuronal activity. The protein is High affinity choline transporter 1 of Mus musculus (Mouse).